Reading from the N-terminus, the 174-residue chain is Thiol-disulfide oxidoreductase ResA (174 aa).

A helical; Signal-anchor for type II membrane protein transmembrane segment spans residues 11–30; that stretch reads TVILLLLLAALGYTIYANFF. A Thioredoxin domain is found at 36 to 174; the sequence is VAVGSTAPDF…IKQHLESIKP (139 aa). Cys-74 and Cys-77 are joined by a disulfide.

It belongs to the thioredoxin family. ResA subfamily.

It localises to the cell membrane. Its pathway is protein modification; cytochrome c assembly. Its function is as follows. Thiol-disulfide oxidoreductase which is required in disulfide reduction during c-type cytochrome synthesis. May accept reducing equivalents from CcdA, leading to breakage of disulfide bonds in apocytochrome c; following this reduction heme can be covalently attached. In Geobacillus thermodenitrificans (strain NG80-2), this protein is Thiol-disulfide oxidoreductase ResA.